A 406-amino-acid polypeptide reads, in one-letter code: NYYTPDYETKGTDILAAFRMTPQPGVPPEEAGAAVAAESSTGTWTTVWTDGLTSLDRYKGRCYDIEPVAGEEHQFIAYVAYPLDLFEEGSVTNLFTSIVGNVFGFKALRALRLGDLRIPPSYSKTFMGPPHGIQVERDKLNKYGRPFLGCTIKPKLGLSAKNYGRAVYECLRGGLDFTKDDENVNSQPFMRWRDRFLFVAEALFKAQSETGEVKGHYLNATAGTCEEMFKRAIFARELGAPIVMHDYLTGGFTANTSLAYYCRDNGLLLHIHRAMHAVIDRQKNHGMHFRVLAKALRMSGGDHFHSGTVVGKLEGERDITLGFVDLLRDDYIDKDRSRGIYFTQDWVSMPGVLPVASGGIHVWHMPALTEIFGDDSVLQFGGGTLGHPWGNAPGAVANRVALVACV.

2 residues coordinate substrate: Asn101 and Thr151. The active-site Proton acceptor is Lys153. Lys155 lines the substrate pocket. The Mg(2+) site is built by Lys179, Asp181, and Glu182. An N6-carboxylysine modification is found at Lys179. The Proton acceptor role is filled by His272. Substrate is bound by residues Arg273, His305, and Ser357.

This sequence belongs to the RuBisCO large chain family. Type I subfamily. Heterohexadecamer of 8 large chains and 8 small chains; disulfide-linked. The disulfide link is formed within the large subunit homodimers. Mg(2+) is required as a cofactor. Post-translationally, the disulfide bond which can form in the large chain dimeric partners within the hexadecamer appears to be associated with oxidative stress and protein turnover.

The protein resides in the plastid. The protein localises to the chloroplast. The catalysed reaction is 2 (2R)-3-phosphoglycerate + 2 H(+) = D-ribulose 1,5-bisphosphate + CO2 + H2O. The enzyme catalyses D-ribulose 1,5-bisphosphate + O2 = 2-phosphoglycolate + (2R)-3-phosphoglycerate + 2 H(+). Its function is as follows. RuBisCO catalyzes two reactions: the carboxylation of D-ribulose 1,5-bisphosphate, the primary event in carbon dioxide fixation, as well as the oxidative fragmentation of the pentose substrate in the photorespiration process. Both reactions occur simultaneously and in competition at the same active site. In Trichomanes striatum (Fern), this protein is Ribulose bisphosphate carboxylase large chain (rbcL).